The following is a 193-amino-acid chain: ATP-dependent Clp protease proteolytic subunit (193 aa).

Serine 98 (nucleophile) is an active-site residue. Residue histidine 123 is part of the active site.

The protein belongs to the peptidase S14 family. Fourteen ClpP subunits assemble into 2 heptameric rings which stack back to back to give a disk-like structure with a central cavity, resembling the structure of eukaryotic proteasomes.

The protein resides in the cytoplasm. The catalysed reaction is Hydrolysis of proteins to small peptides in the presence of ATP and magnesium. alpha-casein is the usual test substrate. In the absence of ATP, only oligopeptides shorter than five residues are hydrolyzed (such as succinyl-Leu-Tyr-|-NHMec, and Leu-Tyr-Leu-|-Tyr-Trp, in which cleavage of the -Tyr-|-Leu- and -Tyr-|-Trp bonds also occurs).. Its function is as follows. Cleaves peptides in various proteins in a process that requires ATP hydrolysis. Has a chymotrypsin-like activity. Plays a major role in the degradation of misfolded proteins. This is ATP-dependent Clp protease proteolytic subunit from Agathobacter rectalis (strain ATCC 33656 / DSM 3377 / JCM 17463 / KCTC 5835 / VPI 0990) (Eubacterium rectale).